A 69-amino-acid polypeptide reads, in one-letter code: uncharacterized protein (69 aa).

This is an uncharacterized protein from Mycobacterium bovis (strain ATCC BAA-935 / AF2122/97).